The primary structure comprises 445 residues: tRNA modification GTPase MnmE (445 aa).

Arg20, Glu79, and Lys119 together coordinate (6S)-5-formyl-5,6,7,8-tetrahydrofolate. Positions 215–371 (GLKLAIIGPP…ILKNIENIAE (157 aa)) constitute a TrmE-type G domain. Residue Asn225 participates in K(+) binding. GTP-binding positions include 225-230 (NTGKSS), 244-250 (SNIAGTT), and 269-272 (DTAG). Mg(2+) is bound at residue Ser229. Residues Ser244, Ile246, and Thr249 each contribute to the K(+) site. Thr250 serves as a coordination point for Mg(2+). (6S)-5-formyl-5,6,7,8-tetrahydrofolate is bound at residue Lys445.

Belongs to the TRAFAC class TrmE-Era-EngA-EngB-Septin-like GTPase superfamily. TrmE GTPase family. As to quaternary structure, homodimer. Heterotetramer of two MnmE and two MnmG subunits. K(+) serves as cofactor.

It localises to the cytoplasm. Functionally, exhibits a very high intrinsic GTPase hydrolysis rate. Involved in the addition of a carboxymethylaminomethyl (cmnm) group at the wobble position (U34) of certain tRNAs, forming tRNA-cmnm(5)s(2)U34. This is tRNA modification GTPase MnmE from Rickettsia prowazekii (strain Madrid E).